A 332-amino-acid chain; its full sequence is 2,3-diketo-L-gulonate reductase (332 aa).

Catalysis depends on H44, which acts as the Proton donor. NAD(+)-binding positions include 168–174 (ITMVDMS), 224–225 (WK), and 304–306 (GHE).

It belongs to the LDH2/MDH2 oxidoreductase family. DlgD subfamily. As to quaternary structure, homodimer.

The protein resides in the cytoplasm. The enzyme catalyses 3-dehydro-L-gulonate + NAD(+) = 2,3-dioxo-L-gulonate + NADH + H(+). It carries out the reaction 3-dehydro-L-gulonate + NADP(+) = 2,3-dioxo-L-gulonate + NADPH + H(+). Catalyzes the reduction of 2,3-diketo-L-gulonate in the presence of NADH, to form 3-keto-L-gulonate. This Escherichia coli (strain K12 / MC4100 / BW2952) protein is 2,3-diketo-L-gulonate reductase.